The primary structure comprises 165 residues: NADPH-dependent 7-cyano-7-deazaguanine reductase (165 aa).

The active-site Thioimide intermediate is the C56. The Proton donor role is filled by D63. Substrate-binding positions include 78–80 (VES) and 97–98 (HE).

It belongs to the GTP cyclohydrolase I family. QueF type 1 subfamily.

Its subcellular location is the cytoplasm. The enzyme catalyses 7-aminomethyl-7-carbaguanine + 2 NADP(+) = 7-cyano-7-deazaguanine + 2 NADPH + 3 H(+). It participates in tRNA modification; tRNA-queuosine biosynthesis. Catalyzes the NADPH-dependent reduction of 7-cyano-7-deazaguanine (preQ0) to 7-aminomethyl-7-deazaguanine (preQ1). The polypeptide is NADPH-dependent 7-cyano-7-deazaguanine reductase (Bacillus licheniformis (strain ATCC 14580 / DSM 13 / JCM 2505 / CCUG 7422 / NBRC 12200 / NCIMB 9375 / NCTC 10341 / NRRL NRS-1264 / Gibson 46)).